Here is a 409-residue protein sequence, read N- to C-terminus: Autophagy-related protein 37 (409 aa).

The Cytoplasmic portion of the chain corresponds to 1 to 313; the sequence is MSESIDRVFV…LKLIKTVIKH (313 aa). Residues 5 to 103 enclose the ACB domain; the sequence is IDRVFVKAIG…LIDTMKQFAS (99 aa). A helical membrane pass occupies residues 314 to 334; sequence VAIDAVIIAVLVAVIKRSIII. Topologically, residues 335 to 409 are peroxisomal; sequence PNLISNEISL…VSRIRLIKRN (75 aa).

It belongs to the ATG37 family. Interacts with ATG30 and PEX3. In terms of processing, phosphorylated.

The protein resides in the peroxisome membrane. In terms of biological role, acyl-CoA binding protein which acts as the peroxisome receptor for pexophagy. Required for both micropexophagy and macropexophagy, but not for the cytoplasm to vacuole transport (Cvt) or autophagy pathways. Required for functional micropexophagic apparatus (MIPA) and relocation of ATG11 to the peroxisome-sequestering arms of the vacuole. Binds palmitoyl-CoA but not oleyl-CoA. This chain is Autophagy-related protein 37, found in Komagataella phaffii (strain GS115 / ATCC 20864) (Yeast).